The following is a 248-amino-acid chain: 3-deoxy-manno-octulosonate cytidylyltransferase (248 aa).

The protein belongs to the KdsB family.

The protein resides in the cytoplasm. The enzyme catalyses 3-deoxy-alpha-D-manno-oct-2-ulosonate + CTP = CMP-3-deoxy-beta-D-manno-octulosonate + diphosphate. It functions in the pathway nucleotide-sugar biosynthesis; CMP-3-deoxy-D-manno-octulosonate biosynthesis; CMP-3-deoxy-D-manno-octulosonate from 3-deoxy-D-manno-octulosonate and CTP: step 1/1. It participates in bacterial outer membrane biogenesis; lipopolysaccharide biosynthesis. Its function is as follows. Activates KDO (a required 8-carbon sugar) for incorporation into bacterial lipopolysaccharide in Gram-negative bacteria. The chain is 3-deoxy-manno-octulosonate cytidylyltransferase from Christiangramia forsetii (strain DSM 17595 / CGMCC 1.15422 / KT0803) (Gramella forsetii).